A 72-amino-acid chain; its full sequence is Translation initiation factor IF-1 (72 aa).

The S1-like domain maps to 1-72; that stretch reads MSKEDLIEFT…SKGRITFRFK (72 aa).

The protein belongs to the IF-1 family. As to quaternary structure, component of the 30S ribosomal translation pre-initiation complex which assembles on the 30S ribosome in the order IF-2 and IF-3, IF-1 and N-formylmethionyl-tRNA(fMet); mRNA recruitment can occur at any time during PIC assembly.

It localises to the cytoplasm. Its function is as follows. One of the essential components for the initiation of protein synthesis. Stabilizes the binding of IF-2 and IF-3 on the 30S subunit to which N-formylmethionyl-tRNA(fMet) subsequently binds. Helps modulate mRNA selection, yielding the 30S pre-initiation complex (PIC). Upon addition of the 50S ribosomal subunit IF-1, IF-2 and IF-3 are released leaving the mature 70S translation initiation complex. The polypeptide is Translation initiation factor IF-1 (Gluconobacter oxydans (strain 621H) (Gluconobacter suboxydans)).